A 313-amino-acid polypeptide reads, in one-letter code: Olfactory receptor 1M1 (313 aa).

Over 1-25 the chain is Extracellular; the sequence is MEPRNQTSASQFILLGLSEKPEQET. The N-linked (GlcNAc...) asparagine glycan is linked to Asn-5. Residues 26–49 traverse the membrane as a helical segment; sequence LLFSLFFCMYLVMVVGNLLIILAI. Topologically, residues 50–57 are cytoplasmic; the sequence is SIDSHLHT. The chain crosses the membrane as a helical span at residues 58–79; the sequence is PMYFFLANLSLVDFCLATNTIP. The Extracellular segment spans residues 80–100; that stretch reads KMLVSLQTGSKAISYPCCLIQ. Cys-97 and Cys-189 are joined by a disulfide. A helical membrane pass occupies residues 101–120; it reads MYFFHFFGIVDSVIIAMMAY. Residues 121–139 are Cytoplasmic-facing; sequence DRFVAICHPLHYAKIMSLR. A helical membrane pass occupies residues 140 to 158; sequence LCRLLVGALWAFSCFISLT. Topologically, residues 159 to 196 are extracellular; the sequence is HILLMARLVFCGSHEVPHYFCDLTPILRLSCTDTSVNR. A helical membrane pass occupies residues 197-219; sequence IFILIVAGMVIATPFVCILASYA. The Cytoplasmic portion of the chain corresponds to 220 to 236; sequence RILVAIMKVPSAGGRKK. The chain crosses the membrane as a helical span at residues 237 to 259; it reads AFSTCSSHLSVVALFYGTTIGVY. The Extracellular segment spans residues 260-272; that stretch reads LCPSSVLTTVKEK. Residues 273 to 292 traverse the membrane as a helical segment; that stretch reads ASAVMYTAVTPMLNPFIYSL. Topologically, residues 293–313 are cytoplasmic; the sequence is RNRDLKGALRKLVNRKITSSS.

It belongs to the G-protein coupled receptor 1 family.

It localises to the cell membrane. Its function is as follows. Odorant receptor. The protein is Olfactory receptor 1M1 of Homo sapiens (Human).